A 382-amino-acid chain; its full sequence is 3-dehydroquinate synthase (382 aa).

Residues 81-86 (EGEGSK), 115-119 (GVVGD), 139-140 (TS), Lys-152, and Lys-161 contribute to the NAD(+) site. Positions 194, 256, and 274 each coordinate Zn(2+).

Belongs to the sugar phosphate cyclases superfamily. Dehydroquinate synthase family. Co(2+) is required as a cofactor. The cofactor is Zn(2+). Requires NAD(+) as cofactor.

It localises to the cytoplasm. It carries out the reaction 7-phospho-2-dehydro-3-deoxy-D-arabino-heptonate = 3-dehydroquinate + phosphate. It participates in metabolic intermediate biosynthesis; chorismate biosynthesis; chorismate from D-erythrose 4-phosphate and phosphoenolpyruvate: step 2/7. In terms of biological role, catalyzes the conversion of 3-deoxy-D-arabino-heptulosonate 7-phosphate (DAHP) to dehydroquinate (DHQ). The chain is 3-dehydroquinate synthase from Bradyrhizobium sp. (strain BTAi1 / ATCC BAA-1182).